The sequence spans 156 residues: Small ribosomal subunit protein uS7 (156 aa).

The protein belongs to the universal ribosomal protein uS7 family. As to quaternary structure, part of the 30S ribosomal subunit. Contacts proteins S9 and S11.

Functionally, one of the primary rRNA binding proteins, it binds directly to 16S rRNA where it nucleates assembly of the head domain of the 30S subunit. Is located at the subunit interface close to the decoding center, probably blocks exit of the E-site tRNA. This Brucella anthropi (strain ATCC 49188 / DSM 6882 / CCUG 24695 / JCM 21032 / LMG 3331 / NBRC 15819 / NCTC 12168 / Alc 37) (Ochrobactrum anthropi) protein is Small ribosomal subunit protein uS7.